The chain runs to 164 residues: Sorting nexin-3 (164 aa).

The tract at residues 1-26 (MSGKREFKSFGSTEETMFSQHHKIPS) is disordered. Polar residues predominate over residues 10–26 (FGSTEETMFSQHHKIPS). Residues 40–163 (IEVRNPKTHV…IRFIEDDKFV (124 aa)) form the PX domain. A 1,2-diacyl-sn-glycero-3-phospho-(1D-myo-inositol-3-phosphate) contacts are provided by R83, S85, K114, R120, and R129.

This sequence belongs to the sorting nexin family.

The protein localises to the cytoplasm. The protein resides in the golgi apparatus membrane. Its subcellular location is the prevacuolar compartment membrane. Required for retention of late Golgi membrane proteins. Component of the retrieval machinery that functions by direct interaction with the cytosolic tails of certain TGN membrane proteins during the sorting/budding process at the prevacuolar compartment. Binds phosphatidylinositol 3-phosphate (PtdIns(P3)). The chain is Sorting nexin-3 (SNX3) from Candida glabrata (strain ATCC 2001 / BCRC 20586 / JCM 3761 / NBRC 0622 / NRRL Y-65 / CBS 138) (Yeast).